The chain runs to 191 residues: Fe/S biogenesis protein NfuA (191 aa).

Residues C149 and C152 each contribute to the [4Fe-4S] cluster site.

This sequence belongs to the NfuA family. In terms of assembly, homodimer. [4Fe-4S] cluster serves as cofactor.

Involved in iron-sulfur cluster biogenesis. Binds a 4Fe-4S cluster, can transfer this cluster to apoproteins, and thereby intervenes in the maturation of Fe/S proteins. Could also act as a scaffold/chaperone for damaged Fe/S proteins. The sequence is that of Fe/S biogenesis protein NfuA from Pseudoalteromonas translucida (strain TAC 125).